A 398-amino-acid chain; its full sequence is Phosphoglycerate kinase (398 aa).

Substrate-binding positions include 21 to 23 (DFN), Arg36, 59 to 62 (HLGR), Arg119, and Arg157. Residues Lys208, Gly296, Glu327, and 354–357 (GGDS) each bind ATP.

The protein belongs to the phosphoglycerate kinase family. As to quaternary structure, monomer.

It localises to the cytoplasm. The catalysed reaction is (2R)-3-phosphoglycerate + ATP = (2R)-3-phospho-glyceroyl phosphate + ADP. The protein operates within carbohydrate degradation; glycolysis; pyruvate from D-glyceraldehyde 3-phosphate: step 2/5. In Streptococcus pneumoniae serotype 19F (strain G54), this protein is Phosphoglycerate kinase.